Consider the following 157-residue polypeptide: 2-C-methyl-D-erythritol 2,4-cyclodiphosphate synthase (157 aa).

A divalent metal cation contacts are provided by Asp8 and His10. 4-CDP-2-C-methyl-D-erythritol 2-phosphate contacts are provided by residues 8–10 (DVH) and 34–35 (HS). Residue His42 coordinates a divalent metal cation. Residues 56–58 (DIG), 61–65 (FPDTD), 100–106 (AQAPKMA), 132–135 (TTTE), Phe139, and Arg142 contribute to the 4-CDP-2-C-methyl-D-erythritol 2-phosphate site.

It belongs to the IspF family. In terms of assembly, homotrimer. Requires a divalent metal cation as cofactor.

It carries out the reaction 4-CDP-2-C-methyl-D-erythritol 2-phosphate = 2-C-methyl-D-erythritol 2,4-cyclic diphosphate + CMP. It functions in the pathway isoprenoid biosynthesis; isopentenyl diphosphate biosynthesis via DXP pathway; isopentenyl diphosphate from 1-deoxy-D-xylulose 5-phosphate: step 4/6. Functionally, involved in the biosynthesis of isopentenyl diphosphate (IPP) and dimethylallyl diphosphate (DMAPP), two major building blocks of isoprenoid compounds. Catalyzes the conversion of 4-diphosphocytidyl-2-C-methyl-D-erythritol 2-phosphate (CDP-ME2P) to 2-C-methyl-D-erythritol 2,4-cyclodiphosphate (ME-CPP) with a corresponding release of cytidine 5-monophosphate (CMP). In Pseudomonas putida (strain GB-1), this protein is 2-C-methyl-D-erythritol 2,4-cyclodiphosphate synthase.